The primary structure comprises 104 residues: Large ribosomal subunit protein uL24 (104 aa).

The protein belongs to the universal ribosomal protein uL24 family. Part of the 50S ribosomal subunit.

One of two assembly initiator proteins, it binds directly to the 5'-end of the 23S rRNA, where it nucleates assembly of the 50S subunit. In terms of biological role, one of the proteins that surrounds the polypeptide exit tunnel on the outside of the subunit. The sequence is that of Large ribosomal subunit protein uL24 from Bradyrhizobium diazoefficiens (strain JCM 10833 / BCRC 13528 / IAM 13628 / NBRC 14792 / USDA 110).